Reading from the N-terminus, the 184-residue chain is dCTP deaminase (184 aa).

DCTP contacts are provided by residues 107–112 (KSTYAR), 131–133 (TLE), Gln-152, Tyr-166, and Gln-176. Glu-133 (proton donor/acceptor) is an active-site residue.

The protein belongs to the dCTP deaminase family. In terms of assembly, homotrimer.

The enzyme catalyses dCTP + H2O + H(+) = dUTP + NH4(+). It functions in the pathway pyrimidine metabolism; dUMP biosynthesis; dUMP from dCTP (dUTP route): step 1/2. Its function is as follows. Catalyzes the deamination of dCTP to dUTP. The chain is dCTP deaminase from Rhodospirillum centenum (strain ATCC 51521 / SW).